The primary structure comprises 329 residues: Beta-ketoacyl-[acyl-carrier-protein] synthase III (329 aa).

Catalysis depends on residues Cys114 and His255. Residues 256 to 260 (QANQR) form an ACP-binding region. The active site involves Asn285.

This sequence belongs to the thiolase-like superfamily. FabH family. Homodimer.

It localises to the cytoplasm. It catalyses the reaction malonyl-[ACP] + acetyl-CoA + H(+) = 3-oxobutanoyl-[ACP] + CO2 + CoA. The protein operates within lipid metabolism; fatty acid biosynthesis. Its function is as follows. Catalyzes the condensation reaction of fatty acid synthesis by the addition to an acyl acceptor of two carbons from malonyl-ACP. Catalyzes the first condensation reaction which initiates fatty acid synthesis and may therefore play a role in governing the total rate of fatty acid production. Possesses both acetoacetyl-ACP synthase and acetyl transacylase activities. Its substrate specificity determines the biosynthesis of branched-chain and/or straight-chain of fatty acids. The chain is Beta-ketoacyl-[acyl-carrier-protein] synthase III from Thermosynechococcus vestitus (strain NIES-2133 / IAM M-273 / BP-1).